We begin with the raw amino-acid sequence, 562 residues long: Nucleoprotein (562 aa).

Residues 53–238 (MRRVKRDDSD…ITQEESQINI (186 aa)) form a binding site for the cap structure m7GTP region. 2 residues coordinate Mn(2+): aspartate 381 and glutamate 383. Residues glutamate 391, cysteine 498, histidine 501, and cysteine 522 each coordinate Zn(2+). Aspartate 526 is a binding site for Mn(2+).

The protein belongs to the arenaviridae nucleocapsid protein family. In terms of assembly, homomultimerizes to form the nucleocapsid. Binds to viral genomic RNA. Interacts with glycoprotein G2. Interacts with protein Z; this interaction probably directs the encapsidated genome to budding sites. Interacts with protein L; this interaction does not interfere with Z-L interaction. Interacts with host IKBKE (via Protein kinase domain); the interaction inhibits IKBKE kinase activity.

The protein resides in the virion. It is found in the host cytoplasm. In terms of biological role, encapsidates the genome, protecting it from nucleases. The encapsidated genomic RNA is termed the nucleocapsid (NC). Serves as template for viral transcription and replication. The increased presence of protein N in host cell does not seem to trigger the switch from transcription to replication as observed in other negative strain RNA viruses. Through the interaction with host IKBKE, strongly inhibits the phosphorylation and nuclear translocation of host IRF3, a protein involved in interferon activation pathway, leading to the inhibition of interferon-beta and IRF3-dependent promoters activation. Also encodes a functional 3'-5' exoribonuclease that degrades preferentially dsRNA substrates and thereby participates in the suppression of interferon induction. The chain is Nucleoprotein from Neotoma (wood rats).